Reading from the N-terminus, the 331-residue chain is Protein MGF 300-4L (331 aa).

This sequence belongs to the asfivirus MGF 300 family.

In African swine fever virus (isolate Tick/Malawi/Lil 20-1/1983) (ASFV), this protein is Protein MGF 300-4L.